A 1244-amino-acid polypeptide reads, in one-letter code: Alpha-protein kinase 1 (1244 aa).

Residues Phe61, Gln67, Arg116, 150–153, Asp231, Lys233, 236–237, and Phe295 contribute to the ADP-D-glycero-beta-D-manno-heptose site; these read RQAR and ST. Disordered stretches follow at residues 650–675, 701–737, 757–798, and 824–848; these read LQEP…TPFS, VRNM…THPS, VKDR…TEDA, and NWPV…DPDA. Residues 652-675 show a composition bias toward polar residues; it reads EPNNDNLEPSQNQPQQQMPLTPFS. The segment covering 713–726 has biased composition (low complexity); it reads SRPSYRSASWSSDS. Positions 757–771 are enriched in basic and acidic residues; the sequence is VKDRQGKEQGEEISE. Positions 787-798 are enriched in acidic residues; that stretch reads PEGETAESTEDA. The 221-residue stretch at 1017–1237 folds into the Alpha-type protein kinase domain; it reads KYSKKSELWT…ICHRLSLTRP (221 aa).

Belongs to the protein kinase superfamily. Alpha-type protein kinase family. ALPK subfamily. Highly expressed in liver. Expressed in the optic nerve and retinal pigmented epithelium. Lower expression is observed in the macula and extramacular retina.

It is found in the cytoplasm. The protein localises to the cytosol. Its subcellular location is the cytoskeleton. It localises to the spindle pole. The protein resides in the microtubule organizing center. It is found in the centrosome. The protein localises to the cell projection. Its subcellular location is the cilium. It carries out the reaction L-seryl-[protein] + ATP = O-phospho-L-seryl-[protein] + ADP + H(+). The catalysed reaction is L-threonyl-[protein] + ATP = O-phospho-L-threonyl-[protein] + ADP + H(+). Serine/threonine-protein kinase activity is stimulated upon ADP-D-glycero-beta-D-manno-heptose (ADP-Heptose)-binding. Its function is as follows. Serine/threonine-protein kinase that detects bacterial pathogen-associated molecular pattern metabolites (PAMPs) and initiates an innate immune response, a critical step for pathogen elimination and engagement of adaptive immunity. Specifically recognizes and binds ADP-D-glycero-beta-D-manno-heptose (ADP-Heptose), a potent PAMP present in all Gram-negative and some Gram-positive bacteria. ADP-Heptose-binding stimulates its kinase activity to phosphorylate and activate TIFA, triggering pro-inflammatory NF-kappa-B signaling. May be involved in monosodium urate monohydrate (MSU)-induced inflammation by mediating phosphorylation of unconventional myosin MYO9A. May also play a role in apical protein transport by mediating phosphorylation of unconventional myosin MYO1A. May play a role in ciliogenesis. This is Alpha-protein kinase 1 from Homo sapiens (Human).